Reading from the N-terminus, the 478-residue chain is MLO-like protein 13 (478 aa).

Residues 1 to 10 are Extracellular-facing; that stretch reads MAEARSGSLE. The helical transmembrane segment at 11–31 threads the bilayer; the sequence is YTPTWVVAFICFIIVLLSLLA. Over 32–60 the chain is Cytoplasmic; it reads ERGLHHLGKCLKRRQQDALFEALQKLKEE. The chain crosses the membrane as a helical span at residues 61–81; that stretch reads LMLLGFISLMLTVSQAAIRHI. Residues 82 to 145 are Extracellular-facing; it reads CVPPALVNNM…VSVEALHQLH (64 aa). Residues 146-166 traverse the membrane as a helical segment; the sequence is IFIFVLAVFHVIFCASTMVLG. Over 167 to 276 the chain is Cytoplasmic; the sequence is GARIQQWKHW…LRTLEIDFKK (110 aa). 2 helical membrane passes run 277–297 and 298–318; these read VVSI…LNVG and GWNT…MVGA. Topologically, residues 319-360 are cytoplasmic; that stretch reads KLEYIISSLALDVSEKRSRAEEAVITPSDELFWFHRPGIVLQ. Residues 361 to 381 traverse the membrane as a helical segment; it reads LIHFILFQNSFEIAFFFWILF. Residues 382–400 are Extracellular-facing; sequence TYGIHSCIMEKLGYLIPRL. A helical membrane pass occupies residues 401–421; that stretch reads VMGVLVQVLCSYSTLPLYALV. Topologically, residues 422 to 478 are cytoplasmic; sequence TQMGSKFKKGIFDNVVQSTLEGWLEDTRNRGESTSEAHRIEMQPTTPESYNVQSENP. The segment at 435–456 is calmodulin-binding; it reads NVVQSTLEGWLEDTRNRGESTS. Positions 449–462 are enriched in basic and acidic residues; sequence RNRGESTSEAHRIE. A disordered region spans residues 449–478; the sequence is RNRGESTSEAHRIEMQPTTPESYNVQSENP. The segment covering 464–478 has biased composition (polar residues); the sequence is QPTTPESYNVQSENP.

Belongs to the MLO family.

It localises to the membrane. May be involved in modulation of pathogen defense and leaf cell death. Activity seems to be regulated by Ca(2+)-dependent calmodulin binding and seems not to require heterotrimeric G proteins. This is MLO-like protein 13 (MLO13) from Arabidopsis thaliana (Mouse-ear cress).